Here is a 767-residue protein sequence, read N- to C-terminus: Cullin-1 (767 aa).

One can recognise a Cullin neddylation domain in the interval 699 to 760; sequence DRKLLLQSAI…EKEYLERQGR (62 aa). K713 is covalently cross-linked (Glycyl lysine isopeptide (Lys-Gly) (interchain with G-Cter in NEDD8)).

The protein belongs to the cullin family. As to quaternary structure, component of multiple Cul1-RING E3 ubiquitin-protein ligase complexes commonly known as SCF (SKP1-CUL1-F-box) complexes, consisting of cul1, skp1, pip1 and a variable F-box domain-containing protein as substrate-specific subunit. Binds to the pop1 homodimer, the pop2 homodimer and the pop1/pop2 heterodimer forming the SCF(pop1-pop2) complex. Interacts with pof3, pof14 and skp1. Post-translationally, neddylated; enhancing the ubiquitin-ligase activity.

The protein localises to the cytoplasm. The protein operates within protein modification; protein ubiquitination. In terms of biological role, core component of multiple cullin-RING-based SCF (SKP1-CUL1-F-box protein) E3 ubiquitin-protein ligase complexes, which mediate the ubiquitination of target proteins. The functional specificity of the SCF complex depends on the F-box protein as substrate recognition component. SCF(pop1-pop2) is required for the maintenance of ploidy and directs ubiquitination of cig2. In Schizosaccharomyces pombe (strain 972 / ATCC 24843) (Fission yeast), this protein is Cullin-1 (cul1).